The chain runs to 67 residues: MSVASEMREMSVEALDDKMKALYQEAFNLRFQHATAQLENTSRIRQVRREIALIKTVIGERKAKEEV.

The protein belongs to the universal ribosomal protein uL29 family.

This Magnetococcus marinus (strain ATCC BAA-1437 / JCM 17883 / MC-1) protein is Large ribosomal subunit protein uL29.